A 668-amino-acid chain; its full sequence is COBRA-like protein 11 (668 aa).

The first 29 residues, 1–29 (MKKLRYVHLNLLLLLLPLINLQFPTLSLA), serve as a signal peptide directing secretion. N-linked (GlcNAc...) asparagine glycans are attached at residues Asn69, Asn125, Asn254, Asn318, Asn329, Asn358, Asn412, Asn432, Asn473, Asn552, Asn560, and Asn579. The GPI-anchor amidated serine moiety is linked to residue Ser636. The propeptide at 637–668 (SGMRLSGIRFLPSILLAITTFHAITDRLLTGV) is removed in mature form.

The protein belongs to the COBRA family. As to expression, mostly expressed in flowers, stamen, anthers and pollen, and, to a lower extent, possibly in roots, stems, leaves and siliques.

The protein localises to the cell membrane. In terms of biological role, involved in the deposition of apical pectin cap and cellulose microfibrils in pollen tubes. Implicated in pollen tubes growth in the female transmitting tract of pistil and toward micropyles, via the perception of ovule guidance cues. The chain is COBRA-like protein 11 from Arabidopsis thaliana (Mouse-ear cress).